A 650-amino-acid polypeptide reads, in one-letter code: Epithelial sodium channel subunit gamma (650 aa).

The Cytoplasmic portion of the chain corresponds to Met-1–Leu-55. Residues Trp-56–Phe-76 form a helical membrane-spanning segment. At Ser-77–Cys-542 the chain is on the extracellular side. 8 disulfides stabilise this stretch: Cys-100–Cys-284, Cys-208–Cys-215, Cys-261–Cys-268, Cys-373–Cys-458, Cys-395–Cys-454, Cys-399–Cys-450, Cys-408–Cys-435, and Cys-410–Cys-424. The gating release of inhibition by proteolysis (GRIP); protease-sensitive region that is responsible for the proteolytic activation of the channel stretch occupies residues Arg-135–Ser-222. Residue Asn-210 is glycosylated (N-linked (GlcNAc...) asparagine). Residue Asn-272 is glycosylated (N-linked (GlcNAc...) asparagine). N-linked (GlcNAc...) asparagine glycosylation is present at Asn-498. A helical membrane pass occupies residues Ser-543–Ala-563. Topologically, residues Arg-564–Leu-650 are cytoplasmic. The interval Arg-577–Tyr-628 is disordered. Polar residues predominate over residues Thr-579 to Asp-593. Positions Pro-624–Tyr-628 match the PY motif; mediates interaction, ubiquitination and inhibition by NEDD4 and NEDD4L motif. Residues Pro-624–Tyr-628 carry the PY motif; recruits WW domain-containing proteins and is thereby required for ubiquitination and inhibition of the channel by NEDD4 and NEDD4L motif.

Belongs to the amiloride-sensitive sodium channel (TC 1.A.6) family. SCNN1G subfamily. In terms of assembly, component of the heterotrimeric epithelial sodium channel (ENaC) composed of an alpha/SCNN1A, a beta/SCNN1B and a gamma/SCNN1G subunit. Interacts with WWP1 (via WW domains). Interacts with WWP2 (via WW domains); inhibits the channel. Interacts with the full-length immature form of PCSK9 (pro-PCSK9); inhibits ENaC by promoting its proteasomal degradation. Interacts with BPIFA1; the interaction is indirect via SCNN1B and inhibits the proteolytic maturation of SCNN1A and SCNN1G and the activation of ENaC. Post-translationally, phosphorylated on serine and threonine residues. Aldosterone and insulin increase the basal level of phosphorylation. In terms of processing, ubiquitinated. Can be ubiquitinated at multiple sites and undergo monoubiquitination and polyubiquitination. Ubiquitination by NEDD4 or NEDD4L inhibits the ENaC channel through endocytosis, intracellular retention and degradation of its individual subunits. ENaC is activated through the proteolytic maturation of its subunits. Furin cleaves the SCNN1G subunit first, followed by cleavage by prostasin (PRSS8), which results in a stepwise increase in the open probability of the channel due to the release of an inhibitory tract. BPIFA1, which is recruited by the SCNN1B subunit, prevents the proteolytic activation of ENaC. Post-translationally, N-glycosylated. N-linked glycans are processed to complex type during ENaC complex assembly and transport to the plasma membrane.

The protein resides in the apical cell membrane. The enzyme catalyses Na(+)(in) = Na(+)(out). With respect to regulation, originally identified and characterized by its inhibition by the diuretic drug amiloride. In terms of biological role, this is one of the three pore-forming subunits of the heterotrimeric epithelial sodium channel (ENaC), a critical regulator of sodium balance and fluid homeostasis. ENaC operates in epithelial tissues, where it mediates the electrodiffusion of sodium ions from extracellular fluid through the apical membrane of cells, with water following osmotically. It plays a key role in maintaining sodium homeostasis through electrogenic sodium reabsorption in the kidneys. Additionally, ENaC is essential for airway surface liquid homeostasis, which is crucial for proper mucus clearance. The protein is Epithelial sodium channel subunit gamma of Rattus norvegicus (Rat).